Reading from the N-terminus, the 394-residue chain is Gastricsin (394 aa).

An N-terminal signal peptide occupies residues 1–16 (MKWMVVVLLCLPLLEA). A propeptide spans 17–65 (TQIKVPLKKIKSIREVLREKGLLGDFLKNHKPQHARKFFRNRLAKTGDF) (activation peptide). Residues 79–391 (YFGQISLGTP…DLANNRVGFA (313 aa)) enclose the Peptidase A1 domain. Asp97 is a catalytic residue. 2 cysteine pairs are disulfide-bonded: Cys110–Cys115 and Cys273–Cys277. The active site involves Thr283. Cys316 and Cys349 form a disulfide bridge.

The protein belongs to the peptidase A1 family.

Its subcellular location is the secreted. The enzyme catalyses More restricted specificity than pepsin A, but shows preferential cleavage at Tyr-|-Xaa bonds. High activity on hemoglobin.. Its function is as follows. Hydrolyzes a variety of proteins. This chain is Gastricsin (PGC), found in Cavia porcellus (Guinea pig).